A 65-amino-acid chain; its full sequence is Large ribosomal subunit protein bL35 (65 aa).

The span at 1–26 shows a compositional bias: basic residues; that stretch reads MPKIKTHRGAAKRFSKTGTGKIKRSH. Residues 1-41 form a disordered region; that stretch reads MPKIKTHRGAAKRFSKTGTGKIKRSHAFTSHILTSKTRKNK.

Belongs to the bacterial ribosomal protein bL35 family.

This is Large ribosomal subunit protein bL35 from Geotalea daltonii (strain DSM 22248 / JCM 15807 / FRC-32) (Geobacter daltonii).